Here is a 133-residue protein sequence, read N- to C-terminus: Sporulation-specific protein 2 (133 aa).

It belongs to the VPS13 family. In terms of assembly, interacts with spo13 and spo15.

It is found in the cytoplasm. The protein resides in the cytoskeleton. The protein localises to the microtubule organizing center. It localises to the spindle pole body. In terms of biological role, involved in sporulation. Plays a significant role in modification of the spindle pole body prior to spore formation and is required for initiating forespore membrane formation. Assists in the localization of spo13 to the outer surface of the SPB. The sequence is that of Sporulation-specific protein 2 (spo2) from Schizosaccharomyces pombe (strain 972 / ATCC 24843) (Fission yeast).